The primary structure comprises 313 residues: uncharacterized protein (313 aa).

The segment at 1-313 is disordered; sequence MSRNGRNDYD…SSSRSGSSRR (313 aa). 4 stretches are compositionally biased toward basic and acidic residues: residues 24–33, 40–85, 95–116, and 156–181; these read LARDRERDSE, TGER…DVKY, TTREARERNSRTARSEERDELG, and TDERHSDAFRMEHRRLAEERERDEFG. Residues 194–205 are compositionally biased toward basic residues; it reads RGRRSNSRRRSS. 2 stretches are compositionally biased toward low complexity: residues 206–266 and 272–313; these read NARS…GSKS and SRSG…SSRR.

The protein resides in the virion. This is an uncharacterized protein from Acanthamoeba polyphaga mimivirus (APMV).